The sequence spans 821 residues: MRSQTASKTSMKPSSNSSAFSVRSSVAVSSHSAMVELKQRILTSLSRLGDRDTYQIAVDDLEKIVVSVPDSPEILPVLLHCLFDSSSDLKAPVKRESIRLLSFLCLSYTDLSFSQLAKIISHIVKRLKDADNGVRDACRDAIGSLSAQFLKEKEVENGNYVGSSLVGLFAKPLFEAMAEQNKSLQSGAAICMGKMIDSATEPPVAAFQKLCPRISKLLNSPNYITKASLLPVVGSLSQVGAIAPQSLESLLHSIHECLGCTNWVTRKAAADVLISLAVHSSSLVADKTDSTLTALEACRFDKIKPVRESLSEALNVWKNIAGKGESGTMDDQKDVSSEQCILERNGETDSVSCEEAGLVMQGSCDGLSSSSDSISKAVLILRKKAPRLTGKDLNPEFFQKLEKRGSGDMPVEVILPSRQKNSSNSNTEDESDANTSVLRSRSNGLCRTAGVHTKQRHFGDFAREKWVDERMNGGESRLRAFDGDHTEVIQADTSENRGNWPPLQRQLLHLERQQTHIMNMLQDFMGGSHDGMISLENRVRGLERIVEEMSREMSIQSGARGKATASWRSDVDGWDSPNYGPSSRNTQTSTRKIRGTGPSEQSGNSRRAWDKSSVAIRLGEGPSARSVWQASKDEATLEAIRVAGEDCGTSRNRRVSIPEAEAMMDEDDDNRGGQQGDPIWTCWSNSVHALRVGDTDSAFAEVLSTGDDHLLVKLMDKTGPVLDQLSSDMGNEAIHSIAQFLLDHTLYDICLSWIQQLLEVSVENGADFMGIPLELKKELLLNLHEALSTTDPPEDWEGLAPDHLLVELASNWNIEIQHFDT.

5 HEAT repeats span residues 69–110 (PDSP…SYTD), 114–151 (SQLA…QFLK), 163–201 (SSLV…SATE), 205–242 (AAFQ…VGAI), and 245–282 (QSLE…HSSS). Ser-406 bears the Phosphoserine mark. 2 disordered regions span residues 416–437 (PSRQ…NTSV) and 553–610 (MSIQ…RAWD). Positions 501–554 (PPLQRQLLHLERQQTHIMNMLQDFMGGSHDGMISLENRVRGLERIVEEMSREMS) form a coiled coil. Polar residues predominate over residues 579 to 590 (YGPSSRNTQTST).

In terms of tissue distribution, expressed at low levels in roots, hypocotyls, stems, flowers, siliques, cotyledons, and leaves. Particularly present in hydathodes of cotyledons and root hairs.

It localises to the cytoplasm. Its subcellular location is the cytoskeleton. Its function is as follows. Plant-specific microtubule-associated protein (MAP) that regulates the orientation of cortical microtubules and the direction of organ growth. This is TORTIFOLIA1-like protein 1 from Arabidopsis thaliana (Mouse-ear cress).